The following is a 301-amino-acid chain: Phospholipase A1 VesT1.02 (301 aa).

Cystine bridges form between C87–C294, C176–C245, C181–C262, C219–C228, C240–C246, and C267–C269. S137 acts as the Nucleophile in catalysis. D165 (charge relay system) is an active-site residue. The active-site Charge relay system is H230.

Belongs to the AB hydrolase superfamily. Lipase family. Is not glycosylated. In terms of tissue distribution, expressed by the venom gland.

It localises to the secreted. The enzyme catalyses a 1,2-diacyl-sn-glycero-3-phosphocholine + H2O = a 2-acyl-sn-glycero-3-phosphocholine + a fatty acid + H(+). Its function is as follows. Catalyzes the hydrolysis of phosphatidylcholine with phospholipase A1 activity. Shows hemolytic activity. This Vespa tropica (Greater banded hornet) protein is Phospholipase A1 VesT1.02.